Consider the following 396-residue polypeptide: Tryptophan synthase beta chain (396 aa).

Position 88 is an N6-(pyridoxal phosphate)lysine (Lys88).

The protein belongs to the TrpB family. Tetramer of two alpha and two beta chains. It depends on pyridoxal 5'-phosphate as a cofactor.

The catalysed reaction is (1S,2R)-1-C-(indol-3-yl)glycerol 3-phosphate + L-serine = D-glyceraldehyde 3-phosphate + L-tryptophan + H2O. Its pathway is amino-acid biosynthesis; L-tryptophan biosynthesis; L-tryptophan from chorismate: step 5/5. The beta subunit is responsible for the synthesis of L-tryptophan from indole and L-serine. This chain is Tryptophan synthase beta chain, found in Actinobacillus pleuropneumoniae serotype 7 (strain AP76).